Reading from the N-terminus, the 137-residue chain is Basic phospholipase A2 homolog Ts-R6 (137 aa).

The N-terminal stretch at 1-16 (MRTLWIMAVLLLGVEG) is a signal peptide. 7 disulfide bridges follow: C42–C130, C44–C60, C59–C110, C65–C137, C66–C103, C73–C97, and C91–C101.

As to expression, expressed by the venom gland.

The protein localises to the secreted. In terms of biological role, snake venom phospholipase A2 homolog that induces local edema a few hours after injection (5-10 ug) in the hind paw and shows weak anticoagulant and myotoxic activities. In Trimeresurus stejnegeri (Chinese green tree viper), this protein is Basic phospholipase A2 homolog Ts-R6.